Here is a 161-residue protein sequence, read N- to C-terminus: UPF0178 protein BSUIS_A1819 (161 aa).

Belongs to the UPF0178 family.

The sequence is that of UPF0178 protein BSUIS_A1819 from Brucella suis (strain ATCC 23445 / NCTC 10510).